A 193-amino-acid polypeptide reads, in one-letter code: Sorting nexin-22 (193 aa).

The interval 1 to 21 is disordered; the sequence is MLEVHIPSVGPEAEGPRQSPE. The PX domain maps to 1-118; that stretch reads MLEVHIPSVG…HFPTDPKASN (118 aa). Arg43, Ser45, Lys66, and Arg79 together coordinate a 1,2-diacyl-sn-glycero-3-phospho-(1D-myo-inositol-3-phosphate).

The protein belongs to the sorting nexin family. In terms of assembly, (Microbial infection) Interacts with P.falciparum (strain 3D7) CK1. As to expression, expressed in erythrocytes (at protein level).

It localises to the cytoplasmic vesicle membrane. May be involved in several stages of intracellular trafficking. Interacts with membranes containing phosphatidylinositol 3-phosphate (PtdIns(3P)). In Homo sapiens (Human), this protein is Sorting nexin-22 (SNX22).